Here is a 156-residue protein sequence, read N- to C-terminus: 6,7-dimethyl-8-ribityllumazine synthase (156 aa).

5-amino-6-(D-ribitylamino)uracil-binding positions include Phe23, Ala57–Glu59, and Thr81–Ile83. Position 86-87 (Ser86–Thr87) interacts with (2S)-2-hydroxy-3-oxobutyl phosphate. The active-site Proton donor is His89. Phe114 contributes to the 5-amino-6-(D-ribitylamino)uracil binding site. (2S)-2-hydroxy-3-oxobutyl phosphate is bound at residue Arg128.

Belongs to the DMRL synthase family. In terms of assembly, forms an icosahedral capsid composed of 60 subunits, arranged as a dodecamer of pentamers.

The catalysed reaction is (2S)-2-hydroxy-3-oxobutyl phosphate + 5-amino-6-(D-ribitylamino)uracil = 6,7-dimethyl-8-(1-D-ribityl)lumazine + phosphate + 2 H2O + H(+). It participates in cofactor biosynthesis; riboflavin biosynthesis; riboflavin from 2-hydroxy-3-oxobutyl phosphate and 5-amino-6-(D-ribitylamino)uracil: step 1/2. Its function is as follows. Catalyzes the formation of 6,7-dimethyl-8-ribityllumazine by condensation of 5-amino-6-(D-ribitylamino)uracil with 3,4-dihydroxy-2-butanone 4-phosphate. This is the penultimate step in the biosynthesis of riboflavin. The polypeptide is 6,7-dimethyl-8-ribityllumazine synthase (Halalkalibacterium halodurans (strain ATCC BAA-125 / DSM 18197 / FERM 7344 / JCM 9153 / C-125) (Bacillus halodurans)).